Reading from the N-terminus, the 154-residue chain is 6,7-dimethyl-8-ribityllumazine synthase (154 aa).

5-amino-6-(D-ribitylamino)uracil-binding positions include 22 to 23, 56 to 58, and 80 to 82; these read FN, AFE, and TVI. 85 to 86 is a (2S)-2-hydroxy-3-oxobutyl phosphate binding site; the sequence is AT. Histidine 88 functions as the Proton donor in the catalytic mechanism. Phenylalanine 113 provides a ligand contact to 5-amino-6-(D-ribitylamino)uracil. Position 127 (arginine 127) interacts with (2S)-2-hydroxy-3-oxobutyl phosphate.

Belongs to the DMRL synthase family. As to quaternary structure, forms an icosahedral capsid composed of 60 subunits, arranged as a dodecamer of pentamers. Can interact with riboflavin synthase, forming a lumazine synthase/riboflavin synthase complex, also designated as 'heavy riboflavin synthase complex', which consists of a trimer of riboflavin synthase enclosed within the icosahedral structure composed of 60 subunits of 6,7-dimethyl-8-ribityllumazine synthase.

It carries out the reaction (2S)-2-hydroxy-3-oxobutyl phosphate + 5-amino-6-(D-ribitylamino)uracil = 6,7-dimethyl-8-(1-D-ribityl)lumazine + phosphate + 2 H2O + H(+). It participates in cofactor biosynthesis; riboflavin biosynthesis; riboflavin from 2-hydroxy-3-oxobutyl phosphate and 5-amino-6-(D-ribitylamino)uracil: step 1/2. Its function is as follows. Catalyzes the formation of 6,7-dimethyl-8-ribityllumazine by condensation of 5-amino-6-(D-ribitylamino)uracil with 3,4-dihydroxy-2-butanone 4-phosphate. This is the penultimate step in the biosynthesis of riboflavin. Is able to use the non-natural R enantiomer of 3,4-dihydroxy-2-butanone 4-phosphate as a substrate, but with less efficiency than the natural S enantiomer. Cannot use unphosphorylated 3,4-dihydroxy-2-butanone, 3,4-dihydroxy-2-butanone 3-phosphate or diacetyl as substrates. The protein is 6,7-dimethyl-8-ribityllumazine synthase (ribH) of Bacillus subtilis (strain 168).